A 485-amino-acid polypeptide reads, in one-letter code: ATP synthase subunit beta, cyanelle (485 aa).

162–169 serves as a coordination point for ATP; the sequence is GGAGVGKT.

Belongs to the ATPase alpha/beta chains family. F-type ATPases have 2 components, CF(1) - the catalytic core - and CF(0) - the membrane proton channel. CF(1) has five subunits: alpha(3), beta(3), gamma(1), delta(1), epsilon(1). CF(0) has four main subunits: a(1), b(1), b'(1) and c(9-12).

It localises to the plastid. The protein resides in the cyanelle thylakoid membrane. The catalysed reaction is ATP + H2O + 4 H(+)(in) = ADP + phosphate + 5 H(+)(out). In terms of biological role, produces ATP from ADP in the presence of a proton gradient across the membrane. The catalytic sites are hosted primarily by the beta subunits. This Cyanophora paradoxa protein is ATP synthase subunit beta, cyanelle.